A 940-amino-acid chain; its full sequence is MCCAIWSASRAPACSASQLSSSHAVRPSVVPDANPRAAPRYSPDLRIQCTSGTPRPCGSSPLAIVTSRETARATTPSAVPNGASVSNSPCATAASTGAGALDPPVRSSISNSRRGPTSGSVRGRPRCSSSVRSAAASACSRASACIGARCHTVTNEVAPPSSASATRIAPAVTGSGSPSADSCTAPPSSTADARAPRSADSAAVCGQPRRLTLCRCARPSASRASSQAAATPGSSNSGARGSGRSVITSHASRPLIASSPTVQRNQTTVHQQTCEGPTCVQRSVTRLTAMSNPSHAEVPSAYPPPADFAANANATGELYAEAEKDRLAFWEKQAKRLSWQTPFTDVLDWSDAPFAKWFVGGKINVAYNCVDRHVEAGNGDRVAIHWEGEPVGDARSITYAELKDEVCKAANALTDLGLVAGDRVAIYMPMIPEAIVAMLACARLGVMHSVVFAGFSASALRARIEDAEAKLVITSDGQYRRGKAASLKEAVDEAVADQPSVKNVLVVRRTGIDVKWTDGRDLWWDETVEQASTEHIPAAFDSEQPLFLLYTSGTTGKPKGIVHTSGGYLTQSSYTHWNVFDVKPESDVYWCTADIGWVTGHTYIVYGPLSNGVTQVVYEGTPTSPTEHRHFEVIEKYGVTIYYTAPTLIRTFMKLGHQIPASHDLSSLRLLGSVGEPINPEAWRWYREHIGGGKTPIVDTWWQTETGAIMISPLPGVTAAKPGSAMTPLPGISAKIVDDEGNQLVPGADEAEHVTGYLVLDQPWPAMLRGIWGDPQRFKDTYWSRFAEQGWYFAGDGARYDSDGHIWVLGRIDDVMNVSGHRISTAEVESALVGHAGVAEAAVVGASDDTTGQAICAFVILKASAHGGPENMIEELRAEVAREISPIAKPREIHIVPELPKTRSGKIMRRLLRDVAEGRELGDTSTLVDPSVFEAIRASK.

The N-terminal stretch at 1–33 (MCCAIWSASRAPACSASQLSSSHAVRPSVVPDA) is a signal peptide. Residues 1 to 289 (MCCAIWSASR…VQRSVTRLTA (289 aa)) are unknown. 3 disordered regions span residues 70-127 (TARA…RPRC), 157-202 (VAPP…ADSA), and 224-274 (ASSQ…QQTC). Polar residues-rich tracts occupy residues 72–95 (RATT…TAAS) and 107–120 (SSIS…TSGS). Low complexity-rich tracts occupy residues 184–202 (TAPP…ADSA) and 224–245 (ASSQ…SGRS). The segment covering 258–274 (SSPTVQRNQTTVHQQTC) has biased composition (polar residues). The segment at 290–940 (MSNPSHAEVP…SVFEAIRASK (651 aa)) is acetyl-coenzyme A synthetase. Residues 480–483 (RRGK) and threonine 599 each bind CoA. ATP is bound by residues 675-677 (GEP), 699-704 (DTWWQT), aspartate 796, and arginine 811. Serine 819 contributes to the CoA binding site. Residue arginine 822 coordinates ATP. Valine 833, histidine 835, and valine 838 together coordinate Mg(2+). Lysine 906 is subject to N6-acetyllysine.

Belongs to the ATP-dependent AMP-binding enzyme family. Mg(2+) serves as cofactor. In terms of processing, acetylated on Lys-906 by Pat in the presence of acetyl-CoA as an acetyl donor and ATP. Acetylation results in the inactivation of the enzyme. Deacetylation by the SIR2-homolog deacetylase CobB is required to activate the enzyme.

It catalyses the reaction acetate + ATP + CoA = acetyl-CoA + AMP + diphosphate. In terms of biological role, catalyzes the conversion of acetate into acetyl-CoA (AcCoA), an essential intermediate at the junction of anabolic and catabolic pathways. AcsA undergoes a two-step reaction. In the first half reaction, AcsA combines acetate with ATP to form acetyl-adenylate (AcAMP) intermediate. In the second half reaction, it can then transfer the acetyl group from AcAMP to the sulfhydryl group of CoA, forming the product AcCoA. This Mycolicibacterium smegmatis (strain ATCC 700084 / mc(2)155) (Mycobacterium smegmatis) protein is Acetyl-coenzyme A synthetase (acsA).